A 145-amino-acid chain; its full sequence is MNPAHLLVLLAVCVSLLGAANIPPQSLNLYQFKNMIQCAGTQLCVAYVKYGCYCGPGGTGTPLDQLDRCCQTHDHCYDNAKKFGNCIPYFKTYEYTCNKPDLTCTDAKGSCARNVCDCDRAAAICFAAAPYNLANFGINKETHCQ.

Residues 1–27 (MNPAHLLVLLAVCVSLLGAANIPPQSL) form the signal peptide. 7 disulfides stabilise this stretch: cysteine 38/cysteine 97, cysteine 52/cysteine 144, cysteine 54/cysteine 70, cysteine 69/cysteine 125, cysteine 76/cysteine 118, cysteine 86/cysteine 111, and cysteine 104/cysteine 116. Ca(2+) contacts are provided by tyrosine 53, glycine 55, and glycine 57. Residue histidine 73 is part of the active site. Position 74 (aspartate 74) interacts with Ca(2+). The active site involves aspartate 119.

This sequence belongs to the phospholipase A2 family. Group I subfamily. D49 sub-subfamily. Homodimer; disulfide-linked. The cofactor is Ca(2+). As to expression, expressed by the venom gland.

The protein localises to the secreted. The catalysed reaction is a 1,2-diacyl-sn-glycero-3-phosphocholine + H2O = a 1-acyl-sn-glycero-3-phosphocholine + a fatty acid + H(+). Snake venom phospholipase A2 (PLA2) that inhibits blood coagulation and shows bactericidal activities against both Gram-negative and -positive bacteria (E.coli, MIC=0.4 uM and S.aureus, MIC=0.1 uM). PLA2 catalyzes the calcium-dependent hydrolysis of the 2-acyl groups in 3-sn-phosphoglycerides. The sequence is that of Basic phospholipase A2 BFPA from Bungarus fasciatus (Banded krait).